The following is a 180-amino-acid chain: ATP-dependent protease subunit HslV (180 aa).

Thr2 is a catalytic residue. Na(+)-binding residues include Gly157, Cys160, and Ser163.

Belongs to the peptidase T1B family. HslV subfamily. A double ring-shaped homohexamer of HslV is capped on each side by a ring-shaped HslU homohexamer. The assembly of the HslU/HslV complex is dependent on binding of ATP.

The protein localises to the cytoplasm. The catalysed reaction is ATP-dependent cleavage of peptide bonds with broad specificity.. Its activity is regulated as follows. Allosterically activated by HslU binding. Functionally, protease subunit of a proteasome-like degradation complex believed to be a general protein degrading machinery. The chain is ATP-dependent protease subunit HslV from Wigglesworthia glossinidia brevipalpis.